The sequence spans 422 residues: Glutamyl-tRNA reductase (422 aa).

Residues 49 to 52 (TCNR), Ser107, 112 to 114 (EPQ), and Gln118 each bind substrate. The Nucleophile role is filled by Cys50. Residue 187–192 (GAGETI) participates in NADP(+) binding.

It belongs to the glutamyl-tRNA reductase family. As to quaternary structure, homodimer.

The catalysed reaction is (S)-4-amino-5-oxopentanoate + tRNA(Glu) + NADP(+) = L-glutamyl-tRNA(Glu) + NADPH + H(+). The protein operates within porphyrin-containing compound metabolism; protoporphyrin-IX biosynthesis; 5-aminolevulinate from L-glutamyl-tRNA(Glu): step 1/2. In terms of biological role, catalyzes the NADPH-dependent reduction of glutamyl-tRNA(Glu) to glutamate 1-semialdehyde (GSA). In Pseudomonas paraeruginosa (strain DSM 24068 / PA7) (Pseudomonas aeruginosa (strain PA7)), this protein is Glutamyl-tRNA reductase.